The primary structure comprises 409 residues: Pectin acetylesterase 4 (409 aa).

The signal sequence occupies residues 1–32 (MVIRSLLQCRTWSKSDWLLASIGIVLIVYSFS). N-linked (GlcNAc...) asparagine glycosylation is found at Asn-36 and Asn-163. Active-site charge relay system residues include Ser-199, Asp-295, and His-362. Residues Asn-379 and Asn-406 are each glycosylated (N-linked (GlcNAc...) asparagine).

Belongs to the pectinacetylesterase family.

It is found in the secreted. Its subcellular location is the cell wall. Functionally, hydrolyzes acetyl esters in homogalacturonan regions of pectin. In type I primary cell wall, galacturonic acid residues of pectin can be acetylated at the O-2 and O-3 positions. Decreasing the degree of acetylation of pectin gels in vitro alters their physical properties. The protein is Pectin acetylesterase 4 of Arabidopsis thaliana (Mouse-ear cress).